Here is a 363-residue protein sequence, read N- to C-terminus: Fructose-1,6-bisphosphatase 1 (363 aa).

Val-2 is subject to N-acetylvaline. AMP-binding positions include 18–22 (VLEEG) and 28–32 (TGEMT). Positions 69 and 98 each coordinate Mg(2+). 113 to 114 (KY) provides a ligand contact to AMP. Residues Asp-119, Leu-121, and Asp-122 each contribute to the Mg(2+) site. 122–125 (DGSS) is a binding site for substrate. Arg-141 serves as a coordination point for AMP. The residue at position 151 (Lys-151) is an N6-succinyllysine. Substrate-binding positions include 213–216 (NEGY), 244–249 (RYVGSM), Tyr-265, and 275–277 (KLR). Tyr-216, Tyr-245, and Tyr-265 each carry phosphotyrosine. Glu-281 is a Mg(2+) binding site. A phosphoserine mark is found at Ser-339 and Ser-353.

It belongs to the FBPase class 1 family. Homotetramer. Mg(2+) serves as cofactor.

It catalyses the reaction beta-D-fructose 1,6-bisphosphate + H2O = beta-D-fructose 6-phosphate + phosphate. Its pathway is carbohydrate biosynthesis; gluconeogenesis. Its activity is regulated as follows. Subject to complex allosteric regulation. The enzyme can assume an active R-state, or an inactive T-state. Intermediate conformations may exist. AMP acts as an allosteric inhibitor. AMP binding affects the turnover of bound substrate and not the affinity for substrate. Fructose 2,6-bisphosphate acts as a competitive inhibitor. Fructose 2,6-bisphosphate and AMP have synergistic effects. In terms of biological role, catalyzes the hydrolysis of fructose 1,6-bisphosphate to fructose 6-phosphate in the presence of divalent cations, acting as a rate-limiting enzyme in gluconeogenesis. Plays a role in regulating glucose sensing and insulin secretion of pancreatic beta-cells. Appears to modulate glycerol gluconeogenesis in liver. Important regulator of appetite and adiposity; increased expression of the protein in liver after nutrient excess increases circulating satiety hormones and reduces appetite-stimulating neuropeptides and thus seems to provide a feedback mechanism to limit weight gain. In Rattus norvegicus (Rat), this protein is Fructose-1,6-bisphosphatase 1 (Fbp1).